The following is a 121-amino-acid chain: UPF0295 protein BH0952 (121 aa).

2 helical membrane passes run 12 to 32 (IRTF…IGIF) and 41 to 61 (VLAM…YFWI).

The protein belongs to the UPF0295 family.

It localises to the cell membrane. The sequence is that of UPF0295 protein BH0952 from Halalkalibacterium halodurans (strain ATCC BAA-125 / DSM 18197 / FERM 7344 / JCM 9153 / C-125) (Bacillus halodurans).